Reading from the N-terminus, the 22-residue chain is CPAIQRCCQQLRNIQPPCRCCQ.

Post-translationally, glycosylated; contains 2.5% carbohydrates.

Functionally, chitin-binding protein. Has antifungal activity against F.solani, F.oxysporum, C.musae and C.gloesporoides but not against P.oligandrum. Depending on concentration the antifungal activity can be fungistatic or fungicidal. Inhibits both spore germination and mycelial growth in F.solani at a concentration of 0.1 mg/ml. Has antifungal activity against C.krusei, C.albicans, C.tropicalis and C.parapsilosis. Has no chitinase, beta-glucanase or hemagglutinating activity. Acts as a flocculent. The polypeptide is Chitin-binding protein 3 (Moringa oleifera (Horseradish tree)).